The primary structure comprises 860 residues: Leucine--tRNA ligase (860 aa).

The 'HIGH' region signature appears at 42–52 (PYPSGRLHMGH). Residues 619–623 (KMSKS) carry the 'KMSKS' region motif. Lysine 622 contributes to the ATP binding site.

The protein belongs to the class-I aminoacyl-tRNA synthetase family.

The protein resides in the cytoplasm. It carries out the reaction tRNA(Leu) + L-leucine + ATP = L-leucyl-tRNA(Leu) + AMP + diphosphate. The sequence is that of Leucine--tRNA ligase from Cronobacter sakazakii (strain ATCC BAA-894) (Enterobacter sakazakii).